A 45-amino-acid chain; its full sequence is uncharacterized protein (45 aa).

This is an uncharacterized protein from Acidianus two-tailed virus (ATV).